A 278-amino-acid polypeptide reads, in one-letter code: Phosphatidylglycerol--prolipoprotein diacylglyceryl transferase (278 aa).

Transmembrane regions (helical) follow at residues 21 to 41 (WYGI…QASV), 54 to 74 (IIFW…VIFQ), and 88 to 108 (IWHG…TGII). Arg-136 lines the a 1,2-diacyl-sn-glycero-3-phospho-(1'-sn-glycerol) pocket. Transmembrane regions (helical) follow at residues 176–196 (QPTF…LILL) and 234–254 (IRVA…IMII).

Belongs to the Lgt family.

It localises to the cell membrane. It catalyses the reaction L-cysteinyl-[prolipoprotein] + a 1,2-diacyl-sn-glycero-3-phospho-(1'-sn-glycerol) = an S-1,2-diacyl-sn-glyceryl-L-cysteinyl-[prolipoprotein] + sn-glycerol 1-phosphate + H(+). The protein operates within protein modification; lipoprotein biosynthesis (diacylglyceryl transfer). Its function is as follows. Catalyzes the transfer of the diacylglyceryl group from phosphatidylglycerol to the sulfhydryl group of the N-terminal cysteine of a prolipoprotein, the first step in the formation of mature lipoproteins. The polypeptide is Phosphatidylglycerol--prolipoprotein diacylglyceryl transferase (Staphylococcus xylosus).